The primary structure comprises 1213 residues: DNA-directed RNA polymerase subunit beta' (1213 aa).

Residues cysteine 60, cysteine 62, cysteine 75, and cysteine 78 each contribute to the Zn(2+) site. The Mg(2+) site is built by aspartate 450, aspartate 452, and aspartate 454. The Zn(2+) site is built by cysteine 819, cysteine 893, cysteine 900, and cysteine 903.

It belongs to the RNA polymerase beta' chain family. In terms of assembly, the RNAP catalytic core consists of 2 alpha, 1 beta, 1 beta' and 1 omega subunit. When a sigma factor is associated with the core the holoenzyme is formed, which can initiate transcription. Mg(2+) is required as a cofactor. The cofactor is Zn(2+).

It carries out the reaction RNA(n) + a ribonucleoside 5'-triphosphate = RNA(n+1) + diphosphate. Its function is as follows. DNA-dependent RNA polymerase catalyzes the transcription of DNA into RNA using the four ribonucleoside triphosphates as substrates. This chain is DNA-directed RNA polymerase subunit beta', found in Streptococcus pyogenes serotype M2 (strain MGAS10270).